We begin with the raw amino-acid sequence, 126 residues long: Actin-depolymerizing factor (126 aa).

One can recognise an ADF-H domain in the interval 1 to 126; sequence EDNCKLKFLE…SFDIIKSRAL (126 aa).

The protein belongs to the actin-binding proteins ADF family. Preferentially in mature anther.

Actin-depolymerizing protein. Severs actin filaments (F-actin) and binds to actin monomers. The chain is Actin-depolymerizing factor from Brassica napus (Rape).